A 37-amino-acid chain; its full sequence is Hemextin A (37 aa).

In terms of assembly, heterotetramer composed of two A and two B chains; non-covalently linked. Does not exist as a complex in the crude venom. Post-translationally, may contain several disulfide bonds. In terms of tissue distribution, expressed by the venom gland.

The protein resides in the secreted. Hemextin A (monomer): exhibits mild anticoagulant activity. It specifically inhibits the activation of FX (F10) by the TF-FVIIa complex (extrinsic tenase complex (ETC)) by non-competitively inhibiting the enzymatic activity of FVIIa. In terms of biological role, hemextin AB complex: specifically inhibits the activation of FX (F10) by the TF-FVIIa complex (extrinsic tenase complex (ETC)) (IC(50)= 100 nM, Ki=25 nM) by non-competitively inhibiting the enzymatic activity of FVIIa. In Hemachatus haemachatus (Rinkhals), this protein is Hemextin A.